The chain runs to 482 residues: UDP-N-acetylmuramate--L-alanine ligase (482 aa).

123–129 contributes to the ATP binding site; it reads GTHGKTT.

It belongs to the MurCDEF family.

The protein localises to the cytoplasm. The enzyme catalyses UDP-N-acetyl-alpha-D-muramate + L-alanine + ATP = UDP-N-acetyl-alpha-D-muramoyl-L-alanine + ADP + phosphate + H(+). It participates in cell wall biogenesis; peptidoglycan biosynthesis. Functionally, cell wall formation. In Pseudomonas putida (strain ATCC 700007 / DSM 6899 / JCM 31910 / BCRC 17059 / LMG 24140 / F1), this protein is UDP-N-acetylmuramate--L-alanine ligase.